The sequence spans 342 residues: Pre-mRNA-splicing factor 18 (342 aa).

It belongs to the PRP18 family. As to quaternary structure, interacts with the spliceosome. Part of a complex containing U4/U6 snRNPs.

Its subcellular location is the nucleus speckle. Participates in the second step of pre-mRNA splicing. This Xenopus laevis (African clawed frog) protein is Pre-mRNA-splicing factor 18 (prpf18).